A 185-amino-acid polypeptide reads, in one-letter code: Pre-histone-like nucleoprotein (185 aa).

N-acetylserine; by host is present on Ser2. The propeptide occupies 2–23; sequence SILISPDNNTGWGLCSAGMYGG. Residue Thr55 is modified to Phosphothreonine; by host. Ser172 carries the post-translational modification Phosphoserine; by host. Residues 175–185 carry the Nuclear localization signal motif; the sequence is RVPVRSRPPRS.

Belongs to the adenoviridae histone-like nucleoprotein family. In terms of assembly, interacts with the core-capsid bridging protein; this interaction bridges the virus core to the capsid. Interacts with host NPM1; this interaction might play a role in placing the pre-histone-like nucleoprotein on the viral DNA or regulating viral gene expression. Interacts with host HMGB1; this interaction inhibits host immune response. In terms of processing, cleaved near the N-terminus by the viral protease during virion maturation to form the mature protein.

The protein localises to the virion. Its subcellular location is the host nucleus. The protein resides in the host nucleolus. Its function is as follows. Plays a role in the inhibition of host immune response within the nucleus. Interacts with cellular nucleosomes and immobilizes the host immune danger signal HMGB1 on chromatin. In turn, prevents HMGB1 release out of the cell and thus decreases inflammation. Also plays a role in the wrapping and condensation of the viral DNA. May also promote viral genome import into the nucleus. This chain is Pre-histone-like nucleoprotein, found in Human adenovirus F serotype 40 (HAdV-40).